The primary structure comprises 499 residues: Rhodopsin, GQ-coupled (499 aa).

The Extracellular segment spans residues 1–50 (MADNKSTLPGLPDINGTLNRSMTPNTGWEGPYDMSVHLHWTQFPPVTEEW). Asn4, Asn15, and Asn19 each carry an N-linked (GlcNAc...) asparagine glycan. A helical transmembrane segment spans residues 51 to 75 (HYIIGVYITIVGLLGIMGNTTVVYI). Residues 76–87 (FSNTKSLRSPSN) are Cytoplasmic-facing. The chain crosses the membrane as a helical span at residues 88 to 114 (LFVVNLAVSDLIFSAVNGFPLLTVSSF). The Extracellular portion of the chain corresponds to 115-128 (HQKWIFGSLFCQLY). The cysteines at positions 125 and 203 are disulfide-linked. A helical membrane pass occupies residues 129 to 148 (GFVGGVFGLMSINTLTAISI). Over 149-168 (DRYVVITKPLQASQTMTRRK) the chain is Cytoplasmic. The helical transmembrane segment at 169–192 (VHLMIVIVWVLSILLSIPPFFGWG) threads the bilayer. The Extracellular portion of the chain corresponds to 193-216 (AYIPEGFQTSCTFDYLTKTARTRT). A helical membrane pass occupies residues 217-244 (YIVVLYLFGFLIPLIIIGVCYVLIIRGV). The Cytoplasmic portion of the chain corresponds to 245–278 (RRHDQKMLTITRSMKTEDARANNKRARSELRISK). The chain crosses the membrane as a helical span at residues 279 to 302 (IAMTVTCLFIISWSPYAIIALIAQ). Topologically, residues 303–310 (FGPAHWIT) are extracellular. The chain crosses the membrane as a helical span at residues 311 to 335 (PLVSELPMMLAKSSSMHNPVVYALS). At Lys322 the chain carries N6-(retinylidene)lysine. The Cytoplasmic segment spans residues 336 to 499 (HPKFRKALYQ…QRVNGLTFNS (164 aa)). S-palmitoyl cysteine attachment occurs at residues Cys353 and Cys354.

This sequence belongs to the G-protein coupled receptor 1 family. Opsin subfamily. Post-translationally, phosphorylated on some or all of the serine and threonine residues present in the C-terminal region. In terms of tissue distribution, retina. Expressed in the depolarizing cell layer of the photoreceptor cells distant from the lens.

The protein localises to the membrane. In terms of biological role, visual pigments such as rhodopsin and porphyropsin are light-absorbing molecules that mediate vision. Rhodopsin consists of an apoprotein, opsin, covalently linked to 11-cis-retinal. This receptor is coupled to the activation of phospholipase C. Porphyropsin consists of opsin covalently linked to 11-cis 3,4-didehydroretinal. This chain is Rhodopsin, GQ-coupled (SCOP1), found in Mizuhopecten yessoensis (Japanese scallop).